Reading from the N-terminus, the 397-residue chain is Tryptophan synthase beta chain (397 aa).

N6-(pyridoxal phosphate)lysine is present on K87.

This sequence belongs to the TrpB family. Tetramer of two alpha and two beta chains. The cofactor is pyridoxal 5'-phosphate.

The enzyme catalyses (1S,2R)-1-C-(indol-3-yl)glycerol 3-phosphate + L-serine = D-glyceraldehyde 3-phosphate + L-tryptophan + H2O. Its pathway is amino-acid biosynthesis; L-tryptophan biosynthesis; L-tryptophan from chorismate: step 5/5. In terms of biological role, the beta subunit is responsible for the synthesis of L-tryptophan from indole and L-serine. This is Tryptophan synthase beta chain from Escherichia coli O139:H28 (strain E24377A / ETEC).